The chain runs to 373 residues: Enoyl-[acyl-carrier-protein] reductase, mitochondrial (373 aa).

The N-terminal 53 residues, 1–53 (MLVSQRVTGARARAPQLAGLLEAWYRHGRTTSSYSALSEPSRVRALVYGNHGD), are a transit peptide targeting the mitochondrion. An N6-acetyllysine; alternate modification is found at Lys61. At Lys61 the chain carries N6-succinyllysine; alternate. The Proton donor role is filled by Tyr94. Residues Asn167, 193–196 (NSGV), and 216–218 (RDR) each bind NADP(+). Lys252 and Lys267 each carry N6-acetyllysine; alternate. Lys252 and Lys267 each carry N6-succinyllysine; alternate. NADP(+) contacts are provided by residues 285-288 (YGGM) and 310-312 (FWL). An N6-succinyllysine modification is found at Lys316. An NADP(+)-binding site is contributed by Lys368.

This sequence belongs to the zinc-containing alcohol dehydrogenase family. Quinone oxidoreductase subfamily. In terms of assembly, homodimer. As to expression, expressed in Purkinje cells (at protein level).

The protein localises to the mitochondrion. It carries out the reaction a 2,3-saturated acyl-[ACP] + NADP(+) = a (2E)-enoyl-[ACP] + NADPH + H(+). It catalyses the reaction (2E)-butenoyl-[ACP] + NADPH + H(+) = butanoyl-[ACP] + NADP(+). The catalysed reaction is (2E)-hexenoyl-[ACP] + NADPH + H(+) = hexanoyl-[ACP] + NADP(+). The enzyme catalyses (2E)-octenoyl-[ACP] + NADPH + H(+) = octanoyl-[ACP] + NADP(+). It carries out the reaction (2E)-decenoyl-[ACP] + NADPH + H(+) = decanoyl-[ACP] + NADP(+). It catalyses the reaction (2E)-dodecenoyl-[ACP] + NADPH + H(+) = dodecanoyl-[ACP] + NADP(+). The catalysed reaction is (2E)-tetradecenoyl-[ACP] + NADPH + H(+) = tetradecanoyl-[ACP] + NADP(+). The enzyme catalyses (2E)-hexadecenoyl-[ACP] + NADPH + H(+) = hexadecanoyl-[ACP] + NADP(+). In terms of biological role, catalyzes the NADPH-dependent reduction of trans-2-enoyl thioesters in mitochondrial fatty acid synthesis (fatty acid synthesis type II). Fatty acid chain elongation in mitochondria uses acyl carrier protein (ACP) as an acyl group carrier, but the enzyme accepts both ACP and CoA thioesters as substrates in vitro. Displays a preference for medium-chain over short- and long-chain substrates. May provide the octanoyl chain used for lipoic acid biosynthesis, regulating protein lipoylation and mitochondrial respiratory activity particularly in Purkinje cells. Involved in iron homeostasis; affecting Fe-S cluster assembly and ceramide metabolism. Required for proper morphology and bioenergetic functions of mitochondria. Required for maintenance of neurons. The polypeptide is Enoyl-[acyl-carrier-protein] reductase, mitochondrial (Mecr) (Mus musculus (Mouse)).